A 229-amino-acid chain; its full sequence is Probable GTP-binding protein EngB (229 aa).

The 176-residue stretch at 53–228 (DLPEVAFAGR…RAEIVRLCID (176 aa)) folds into the EngB-type G domain. Residues 61 to 68 (GRSNVGKS), 88 to 92 (GRTRE), 106 to 109 (DLPG), 173 to 176 (TKAD), and 207 to 209 (TSS) each bind GTP. The Mg(2+) site is built by serine 68 and threonine 90.

This sequence belongs to the TRAFAC class TrmE-Era-EngA-EngB-Septin-like GTPase superfamily. EngB GTPase family. Mg(2+) is required as a cofactor.

Its function is as follows. Necessary for normal cell division and for the maintenance of normal septation. This is Probable GTP-binding protein EngB from Caulobacter vibrioides (strain NA1000 / CB15N) (Caulobacter crescentus).